Here is a 295-residue protein sequence, read N- to C-terminus: Methionine aminopeptidase (295 aa).

Residue His62 coordinates substrate. Asp82, Asp93, and His153 together coordinate a divalent metal cation. His161 serves as a coordination point for substrate. Glu187 and Glu280 together coordinate a divalent metal cation.

This sequence belongs to the peptidase M24A family. Methionine aminopeptidase archaeal type 2 subfamily. In terms of assembly, monomer. Co(2+) serves as cofactor. Zn(2+) is required as a cofactor. The cofactor is Mn(2+). It depends on Fe(2+) as a cofactor.

The enzyme catalyses Release of N-terminal amino acids, preferentially methionine, from peptides and arylamides.. Removes the N-terminal methionine from nascent proteins. The N-terminal methionine is often cleaved when the second residue in the primary sequence is small and uncharged (Met-Ala-, Cys, Gly, Pro, Ser, Thr, or Val). This Pyrococcus horikoshii (strain ATCC 700860 / DSM 12428 / JCM 9974 / NBRC 100139 / OT-3) protein is Methionine aminopeptidase.